Here is a 269-residue protein sequence, read N- to C-terminus: UPF0761 membrane protein HI_0276 (269 aa).

The next 6 membrane-spanning stretches (helical) occupy residues M32 to F52, M89 to D109, F128 to I148, L168 to V188, F203 to F223, and A232 to V252.

This sequence belongs to the UPF0761 family.

Its subcellular location is the cell inner membrane. This chain is UPF0761 membrane protein HI_0276, found in Haemophilus influenzae (strain ATCC 51907 / DSM 11121 / KW20 / Rd).